A 318-amino-acid chain; its full sequence is Ribosomal RNA small subunit methyltransferase H (318 aa).

Residues 35–37 (GGH), aspartate 54, phenylalanine 83, aspartate 104, and glutamine 111 contribute to the S-adenosyl-L-methionine site.

Belongs to the methyltransferase superfamily. RsmH family.

The protein resides in the cytoplasm. It carries out the reaction cytidine(1402) in 16S rRNA + S-adenosyl-L-methionine = N(4)-methylcytidine(1402) in 16S rRNA + S-adenosyl-L-homocysteine + H(+). Its function is as follows. Specifically methylates the N4 position of cytidine in position 1402 (C1402) of 16S rRNA. The chain is Ribosomal RNA small subunit methyltransferase H from Latilactobacillus sakei subsp. sakei (strain 23K) (Lactobacillus sakei subsp. sakei).